Consider the following 538-residue polypeptide: UPF0761 membrane protein PsycPRwf_0630 (538 aa).

The next 6 membrane-spanning stretches (helical) occupy residues 43 to 63 (LLSI…VPAL), 100 to 120 (LTAI…TTIE), 143 to 163 (WTII…SSAV), 183 to 203 (WVQV…YWFI), 215 to 235 (IAGV…GIIM), and 247 to 267 (AFAA…LILL). The segment at 427–538 (SVFSAQDADA…IITEDDNPNK (112 aa)) is disordered. Over residues 482–493 (PPDADIKAAAAK) the composition is skewed to low complexity. The segment covering 503 to 514 (KHTETAKQEHKK) has biased composition (basic and acidic residues).

Belongs to the UPF0761 family.

The protein localises to the cell inner membrane. In Psychrobacter sp. (strain PRwf-1), this protein is UPF0761 membrane protein PsycPRwf_0630.